We begin with the raw amino-acid sequence, 551 residues long: MGCLCINLKKKVKKPTPDISGEQNTEVKSREITPKEQPRQRQPAPRAKFQIVVQPHKLPLPLPQPQEKQKLINHQKQSTLQQPEPILGRPFEDIKEKYSLGRELGRGQFGITYICTEISSGKNFACKSILKRKLIRTKDREDVRREIQIMHYLSGQPNIVEIKGAYEDRQSVHLVMELCEGGELFDKITKRGHYSEKAAAEIIRSVVKVVQICHFMGVIHRDLKPENFLLSSKDEASSMLKATDFGVSVFIEEGKVYEDIVGSAYYVAPEVLKRNYGKAIDIWSAGVILYILLCGNPPFWAETDKGIFEEILRGEIDFESEPWPSISESAKDLVRNMLKYDPKKRFTAAQVLEHPWIREGGEASDKPIDSAVLSRMKQLRAMNKLKKLAFKFIAQNLKEEELKGLKTMFANMDTDKSGTITYDELKSGLEKLGSRLTETEVKQLLEDADVDGNGTIDYIEFISATMNRFRVEREDNLFKAFQHFDKDNSGFISRQELETAMKEYNMGDDIMIKEIISEVDADNDGSINYQEFCNMMKSCSQSHQSKLVQPN.

Gly-2 is lipidated: N-myristoyl glycine. The segment at 12–46 (VKKPTPDISGEQNTEVKSREITPKEQPRQRQPAPR) is disordered. Positions 25 to 39 (TEVKSREITPKEQPR) are enriched in basic and acidic residues. Residues 98 to 357 (YSLGRELGRG…AAQVLEHPWI (260 aa)) form the Protein kinase domain. ATP-binding positions include 104–112 (LGRGQFGIT) and Lys-127. The active-site Proton acceptor is Asp-222. Ser-263 is subject to Phosphoserine. The interval 363–393 (ASDKPIDSAVLSRMKQLRAMNKLKKLAFKFI) is autoinhibitory domain. EF-hand domains follow at residues 400 to 435 (EELKGLKTMFANMDTDKSGTITYDELKSGLEKLGSR), 436 to 471 (LTETEVKQLLEDADVDGNGTIDYIEFISATMNRFRV), 472 to 507 (EREDNLFKAFQHFDKDNSGFISRQELETAMKEYNMG), and 512 to 542 (IKEIISEVDADNDGSINYQEFCNMMKSCSQS). Ca(2+) contacts are provided by Asp-413, Asp-415, Ser-417, Thr-419, Glu-424, Asp-449, Asp-451, Asn-453, Thr-455, Glu-460, Asp-485, Asp-487, Ser-489, Glu-496, Asp-520, Asp-522, Asp-524, Ser-526, and Glu-531.

It belongs to the protein kinase superfamily. Ser/Thr protein kinase family. CDPK subfamily.

The protein resides in the membrane. It catalyses the reaction L-seryl-[protein] + ATP = O-phospho-L-seryl-[protein] + ADP + H(+). It carries out the reaction L-threonyl-[protein] + ATP = O-phospho-L-threonyl-[protein] + ADP + H(+). Activated by calcium. Autophosphorylation may play an important role in the regulation of the kinase activity. Functionally, may play a role in signal transduction pathways that involve calcium as a second messenger. In Arabidopsis thaliana (Mouse-ear cress), this protein is Calcium-dependent protein kinase 19 (CPK19).